A 189-amino-acid polypeptide reads, in one-letter code: Haloacid dehalogenase-like hydrolase domain-containing protein 3 (189 aa).

It belongs to the HAD-like hydrolase superfamily.

The sequence is that of Haloacid dehalogenase-like hydrolase domain-containing protein 3 (hdhd3) from Xenopus tropicalis (Western clawed frog).